The following is a 538-amino-acid chain: Phosphoenolpyruvate carboxykinase (ATP) (538 aa).

3 residues coordinate substrate: Arg-64, Tyr-205, and Lys-211. ATP is bound by residues Lys-211, His-230, and 246 to 254 (GLSGTGKTT). Residues Lys-211 and His-230 each contribute to the Mn(2+) site. Asp-267 is a binding site for Mn(2+). ATP-binding positions include Glu-295, Arg-331, 447–448 (RI), and Thr-453. Arg-331 contributes to the substrate binding site.

This sequence belongs to the phosphoenolpyruvate carboxykinase (ATP) family. As to quaternary structure, monomer. Mn(2+) serves as cofactor.

The protein resides in the cytoplasm. The enzyme catalyses oxaloacetate + ATP = phosphoenolpyruvate + ADP + CO2. The protein operates within carbohydrate biosynthesis; gluconeogenesis. Its function is as follows. Involved in the gluconeogenesis. Catalyzes the conversion of oxaloacetate (OAA) to phosphoenolpyruvate (PEP) through direct phosphoryl transfer between the nucleoside triphosphate and OAA. This Haemophilus influenzae (strain ATCC 51907 / DSM 11121 / KW20 / Rd) protein is Phosphoenolpyruvate carboxykinase (ATP).